We begin with the raw amino-acid sequence, 225 residues long: Uridylate kinase (225 aa).

9 to 10 (GS) is a binding site for ATP. Residue G43 participates in UMP binding. ATP is bound by residues G44 and R48. UMP-binding positions include D65 and 113–119 (TEPAHST). ATP-binding residues include T139, Y145, and D148.

This sequence belongs to the UMP kinase family. Homohexamer.

It localises to the cytoplasm. It carries out the reaction UMP + ATP = UDP + ADP. It participates in pyrimidine metabolism; CTP biosynthesis via de novo pathway; UDP from UMP (UMPK route): step 1/1. Inhibited by UTP. In terms of biological role, catalyzes the reversible phosphorylation of UMP to UDP. This chain is Uridylate kinase, found in Methanobrevibacter smithii (strain ATCC 35061 / DSM 861 / OCM 144 / PS).